The chain runs to 343 residues: Methionine import ATP-binding protein MetN 1 (343 aa).

Residues 2-241 enclose the ABC transporter domain; sequence IKLTHISKVF…PKTPLAQQFI (240 aa). 38–45 lines the ATP pocket; the sequence is GASGAGKS.

This sequence belongs to the ABC transporter superfamily. Methionine importer (TC 3.A.1.24) family. The complex is composed of two ATP-binding proteins (MetN), two transmembrane proteins (MetI) and a solute-binding protein (MetQ).

It is found in the cell inner membrane. The catalysed reaction is L-methionine(out) + ATP + H2O = L-methionine(in) + ADP + phosphate + H(+). The enzyme catalyses D-methionine(out) + ATP + H2O = D-methionine(in) + ADP + phosphate + H(+). Functionally, part of the ABC transporter complex MetNIQ involved in methionine import. Responsible for energy coupling to the transport system. The protein is Methionine import ATP-binding protein MetN 1 of Yersinia pestis bv. Antiqua (strain Antiqua).